The chain runs to 504 residues: Maturase K (504 aa).

Belongs to the intron maturase 2 family. MatK subfamily.

Its subcellular location is the plastid. The protein resides in the chloroplast. Its function is as follows. Usually encoded in the trnK tRNA gene intron. Probably assists in splicing its own and other chloroplast group II introns. In Pseudoturritis turrita (Tower rock-cress), this protein is Maturase K.